A 430-amino-acid chain; its full sequence is Elongation factor 1-gamma (430 aa).

Residues 2–84 (VAGKLYTYPE…YVANETLRGS (83 aa)) form the GST N-terminal domain. In terms of domain architecture, GST C-terminal spans 85-213 (SDLEKAQIIQ…FKLCEKAGEF (129 aa)). Basic and acidic residues-rich tracts occupy residues 232–255 (KTEK…KEQE) and 269–278 (PKSKDPFDEM). Residues 232–278 (KTEKAPKAVKAKPEKKEVPKKEQEEPADAAEEALAAEPKSKDPFDEM) are disordered. The region spanning 271 to 430 (SKDPFDEMPK…RKFNQGKIFK (160 aa)) is the EF-1-gamma C-terminal domain.

EF-1 is composed of four subunits: alpha, beta, delta, and gamma.

Probably plays a role in anchoring the complex to other cellular components. The protein is Elongation factor 1-gamma of Artemia salina (Brine shrimp).